The primary structure comprises 715 residues: Fatty acid oxidation complex subunit alpha (715 aa).

Residues 1 to 194 are enoyl-CoA hydratase; sequence MHEQRAKPSA…RLGLVDDAVP (194 aa). The segment at 310-715 is 3-hydroxyacyl-CoA dehydrogenase; it reads HALHRIGILG…QGERFYPQGS (406 aa).

This sequence in the N-terminal section; belongs to the enoyl-CoA hydratase/isomerase family. In the central section; belongs to the 3-hydroxyacyl-CoA dehydrogenase family. Heterotetramer of two alpha chains (FadJ) and two beta chains (FadI).

Its subcellular location is the cytoplasm. The catalysed reaction is a (3S)-3-hydroxyacyl-CoA = a (2E)-enoyl-CoA + H2O. It carries out the reaction a 4-saturated-(3S)-3-hydroxyacyl-CoA = a (3E)-enoyl-CoA + H2O. It catalyses the reaction a (3S)-3-hydroxyacyl-CoA + NAD(+) = a 3-oxoacyl-CoA + NADH + H(+). The enzyme catalyses (3S)-3-hydroxybutanoyl-CoA = (3R)-3-hydroxybutanoyl-CoA. It participates in lipid metabolism; fatty acid beta-oxidation. Its function is as follows. Catalyzes the formation of a hydroxyacyl-CoA by addition of water on enoyl-CoA. Also exhibits 3-hydroxyacyl-CoA epimerase and 3-hydroxyacyl-CoA dehydrogenase activities. This chain is Fatty acid oxidation complex subunit alpha, found in Serratia proteamaculans (strain 568).